Consider the following 565-residue polypeptide: Molybdenum cofactor biosynthesis protein 1 (565 aa).

The segment at 3-367 (LLARHAIRLL…AVQRKKKQHA (365 aa)) is molybdenum cofactor biosynthesis protein A. Positions 64 to 276 (SFGRHHTYLR…LQIIRQRWPD (213 aa)) constitute a Radical SAM core domain. A GTP-binding site is contributed by Arg73. [4Fe-4S] cluster-binding residues include Cys80 and Cys84. Residue Tyr86 coordinates S-adenosyl-L-methionine. A [4Fe-4S] cluster-binding site is contributed by Cys87. Arg123 provides a ligand contact to GTP. Gly127 is a binding site for S-adenosyl-L-methionine. A GTP-binding site is contributed by Thr154. Ser178 is an S-adenosyl-L-methionine binding site. Residue Lys214 coordinates GTP. Met248 serves as a coordination point for S-adenosyl-L-methionine. The [4Fe-4S] cluster site is built by Cys311 and Cys314. 316–318 (RLR) is a GTP binding site. Cys328 contributes to the [4Fe-4S] cluster binding site. Asp525 (for molybdenum cofactor biosynthesis protein C activity) is an active-site residue.

The protein in the C-terminal section; belongs to the MoaC family. This sequence in the N-terminal section; belongs to the radical SAM superfamily. MoaA family. As to quaternary structure, isoform Mocs1a and isoform Mocs1b probably form a heterooligomer. [4Fe-4S] cluster is required as a cofactor.

The enzyme catalyses GTP + AH2 + S-adenosyl-L-methionine = (8S)-3',8-cyclo-7,8-dihydroguanosine 5'-triphosphate + 5'-deoxyadenosine + L-methionine + A + H(+). It catalyses the reaction (8S)-3',8-cyclo-7,8-dihydroguanosine 5'-triphosphate = cyclic pyranopterin phosphate + diphosphate. It functions in the pathway cofactor biosynthesis; molybdopterin biosynthesis. Isoform Mocs1a and isoform Mocs1b probably form a complex that catalyzes the conversion of 5'-GTP to cyclic pyranopterin monophosphate (cPMP). Mocs1a catalyzes the cyclization of GTP to (8S)-3',8-cyclo-7,8-dihydroguanosine 5'-triphosphate and Mocs1b catalyzes the subsequent conversion of (8S)-3',8-cyclo-7,8-dihydroguanosine 5'-triphosphate to cPMP. This is Molybdenum cofactor biosynthesis protein 1 (Mocs1) from Drosophila melanogaster (Fruit fly).